The following is a 669-amino-acid chain: MGANSSSISELPDNEYLKKLSGAEPISENDPFWNQLLSFSFTTPTNSADLKLLEEATVSVCKSLVEKNPRTGNLGSLIKVFLSRTKELKISAECQNHLFIWQAHNALFIICCLLKVFISRMSEEELQLHFTYEDKTPGSYGTECEDLIEELLCCLIQLIVEIPLLDITYSISLEAVTTLIVFLSCQLFHKEILRESLIHKYLMRGRCLPYTSRLVKTLLYNFIRQERSPPPGSHVFQQQTDGGGLLYGIASGVATGLWTVFTLGGVGSKATPQLDQCSPLANQSLLLLLVLANLTDAPDTPNPYRQAIMSFKNTQDSSAFSSSHPHVFQINFNSLYTALCEQQKSDQATLLLYMLLHQNGNVRTYVLARTDIENLVLPILEILYHVEERNSHHVYMALIILLILTEDDGFNRSIHEVILKNITWYAERVLTEISLGSLLILVVIRTIQYNMTRTRDKYLHTNCLAALANMSAQFRSLHQYAAQRIISLFSLLSKKHNKVLEQATQSLRGSLDSNDSPLPDYAQDLNVIEEVIRMMLEIINSCLTNSLHHNPNLVYALLYKRDLFEQFRTHPSFQDIMQNIDLVISFFSSRLEHAGAELSVERVLEIIKQGAVALPKDRLRKFPELKFKYVEEEQPEEFFIPYVWSLVYNAAVALYWNPRDIQLFTMDSG.

The N-myristoyl glycine moiety is linked to residue Gly2.

This sequence belongs to the dymeclin family. In terms of processing, myristoylated in vitro; myristoylation is not essential for protein targeting to Golgi compartment.

Its subcellular location is the cytoplasm. It is found in the golgi apparatus. Its function is as follows. Necessary for correct organization of Golgi apparatus. The chain is Dymeclin (DYM) from Gallus gallus (Chicken).